The following is a 113-amino-acid chain: UPF0416 protein RF_0879 (113 aa).

Belongs to the UPF0416 family.

The protein is UPF0416 protein RF_0879 of Rickettsia felis (strain ATCC VR-1525 / URRWXCal2) (Rickettsia azadi).